The sequence spans 508 residues: Lysine--tRNA ligase (508 aa).

2 residues coordinate Mg(2+): E416 and E423.

The protein belongs to the class-II aminoacyl-tRNA synthetase family. As to quaternary structure, homodimer. Requires Mg(2+) as cofactor.

The protein resides in the cytoplasm. It catalyses the reaction tRNA(Lys) + L-lysine + ATP = L-lysyl-tRNA(Lys) + AMP + diphosphate. This chain is Lysine--tRNA ligase, found in Prochlorococcus marinus (strain MIT 9303).